A 168-amino-acid polypeptide reads, in one-letter code: GPI-anchored protein LLG1 (168 aa).

The first 23 residues, 1-23 (MELLSRALFFFLLLSVLSSFSSS), serve as a signal peptide directing secretion. The N-linked (GlcNAc...) asparagine glycan is linked to asparagine 57. Asparagine 144 carries the GPI-anchor amidated asparagine lipid modification. Positions 145–168 (AATTSSSRLWLTVSAALLVFVKLF) are cleaved as a propeptide — removed in mature form.

As to quaternary structure, interacts with FER. Expressed in pollen, pollen tubes, sporophytic pistil tissues, in the early stages of female gametophyte development, and in unfertilized, mature ovules. Expressed in roots, lateral roots, shoots, cotyledons, petioles, developing leaves and anther filaments.

Its subcellular location is the cell membrane. In terms of biological role, component of the FER-regulated Rho GTPase signaling complex. Acts as a chaperone and coreceptor for FER. Required for localization of FER to the plasma membrane. The protein is GPI-anchored protein LLG1 of Arabidopsis thaliana (Mouse-ear cress).